The sequence spans 440 residues: Putative F-box/LRR-repeat protein At5g15620 (440 aa).

Residues M1–F52 enclose the F-box domain. LRR repeat units follow at residues F4–S31, L126–S153, F156–R181, S194–R205, P210–D235, Y264–V289, and E318–G343.

The chain is Putative F-box/LRR-repeat protein At5g15620 from Arabidopsis thaliana (Mouse-ear cress).